The sequence spans 167 residues: UPF0114 protein in repA1-repA2 intergenic region (167 aa).

Transmembrane regions (helical) follow at residues 15–35 (LMFPVNIGLSFGFILLTLKFF), 53–73 (LVLIVLSLIDIALVGGLLVMV), and 136–156 (IILCVIIHLTFVLSAFGMAYI).

The protein belongs to the UPF0114 family.

It is found in the cell membrane. This chain is UPF0114 protein in repA1-repA2 intergenic region, found in Buchnera aphidicola subsp. Pterocomma populeum.